The following is a 1385-amino-acid chain: PsbD mRNA maturation factor Nac2, chloroplastic (1385 aa).

A chloroplast-targeting transit peptide spans 1–45 (MGALPCPAHIEHHQGLSSFGTRRVLRQSVACGAHRSRRRSLWAGA). Over residues 132–152 (GPHGAASATGAGSHSSSAGAP) the composition is skewed to low complexity. Disordered regions lie at residues 132–157 (GPHG…PTPR), 263–282 (AVAA…RSSA), 304–360 (TSSR…AAGP), 387–502 (RQQP…GHGQ), 546–568 (NGAG…SGTS), 726–756 (HADS…VAAA), and 840–899 (ARRA…APSA). The segment covering 271 to 281 (QPHEHQQERSS) has biased composition (basic and acidic residues). The span at 304–313 (TSSRRGGRSS) shows a compositional bias: low complexity. The span at 403-412 (NGSGKSGSGG) shows a compositional bias: gly residues. Composition is skewed to low complexity over residues 448–464 (APAA…RPAA), 554–568 (ASAS…SGTS), 729–744 (SSSS…SSSG), and 854–893 (ASTT…AAAG). TPR repeat units lie at residues 851–884 (RRGA…DPAS), 951–984 (GAVM…CPAD), 985–1018 (VALY…DRTD), 1019–1052 (KQLF…HPLN), 1053–1086 (TKII…DPLS), 1091–1124 (VHNR…HPNS), 1125–1158 (AALL…AGAF), 1160–1193 (AAVM…KQLN), and 1205–1238 (AWRA…APAV). Disordered regions lie at residues 1237–1257 (AVRG…GRRP) and 1333–1385 (IQDP…ADDM). Acidic residues predominate over residues 1356 to 1365 (QDADYYEEPE). Basic and acidic residues predominate over residues 1374–1385 (AVRRPMPDADDM).

Part of 2 complexes of about 600 and less than 2000 kDa, both of which also contain non-polysomal RNA.

It is found in the plastid. The protein resides in the chloroplast stroma. Involved, directly or indirectly, in the processing of the chloroplast encoded psbD mRNA to its mature form, acting via the 5'-UTR of the psbD mRNA. The last 588 amino acids of the protein are sufficient to confer stability on the transcript in vivo. The sequence is that of PsbD mRNA maturation factor Nac2, chloroplastic (NAC2) from Chlamydomonas reinhardtii (Chlamydomonas smithii).